Consider the following 259-residue polypeptide: Aliphatic sulfonates import ATP-binding protein SsuB 1 (259 aa).

Positions 15-229 (VECRRITRRF…QASTPGFQAL (215 aa)) constitute an ABC transporter domain. 47-54 (GSSGSGKT) contributes to the ATP binding site.

This sequence belongs to the ABC transporter superfamily. Aliphatic sulfonates importer (TC 3.A.1.17.2) family. The complex is composed of two ATP-binding proteins (SsuB), two transmembrane proteins (SsuC) and a solute-binding protein (SsuA).

The protein localises to the cell inner membrane. It catalyses the reaction ATP + H2O + aliphatic sulfonate-[sulfonate-binding protein]Side 1 = ADP + phosphate + aliphatic sulfonateSide 2 + [sulfonate-binding protein]Side 1.. In terms of biological role, part of the ABC transporter complex SsuABC involved in aliphatic sulfonates import. Responsible for energy coupling to the transport system. The chain is Aliphatic sulfonates import ATP-binding protein SsuB 1 from Pseudomonas fluorescens (strain ATCC BAA-477 / NRRL B-23932 / Pf-5).